The primary structure comprises 370 residues: Nodulation protein Z (370 aa).

One can recognise a GT23 domain in the interval 47–361; the sequence is SSNDRFVVSR…NDPGRLILIE (315 aa).

This sequence belongs to the glycosyltransferase 23 family.

Fucosyltransferase which adds the fucose moiety of the nod factor on its terminal reducing N-acetylglucosamine end. Uses GDP-fucose as the donor group. This is Nodulation protein Z (nodZ) from Bradyrhizobium diazoefficiens (strain JCM 10833 / BCRC 13528 / IAM 13628 / NBRC 14792 / USDA 110).